Reading from the N-terminus, the 104-residue chain is L-rhamnose mutarotase (104 aa).

Position 18 (Tyr-18) interacts with substrate. The Proton donor role is filled by His-22. Residues Tyr-41 and 76 to 77 (WW) contribute to the substrate site.

It belongs to the rhamnose mutarotase family. Homodimer.

Its subcellular location is the cytoplasm. It carries out the reaction alpha-L-rhamnose = beta-L-rhamnose. It functions in the pathway carbohydrate metabolism; L-rhamnose metabolism. Involved in the anomeric conversion of L-rhamnose. The sequence is that of L-rhamnose mutarotase from Shigella sonnei (strain Ss046).